The following is a 969-amino-acid chain: GATOR2 complex protein Wdr59 (969 aa).

A disordered region spans residues 1–24; sequence MPPTETLRPGERGTAGGPGAGAPE. WD repeat units lie at residues 127 to 167, 172 to 211, 215 to 255, 258 to 303, and 307 to 351; these read GHTR…KPAL, VCMSGATQVGFNRVSGNLLAAAHDGDLRIWDIRKGSCPTH, AHLN…RAEK, TTMS…DPIC, and GHTD…LKLC. Thr-373 is modified (phosphothreonine). Residues 435 to 538 form the RWD domain; the sequence is HEFSLLNTNM…RALVAAMKKK (104 aa). A C4-type zinc finger spans residues 891–911; the sequence is ECRKCAKPKRTPKCEPCKRPV. Zn(2+) contacts are provided by Cys-892, Cys-895, Cys-904, Cys-907, Cys-917, Cys-928, His-933, His-936, His-939, Cys-950, Cys-953, Cys-955, and Cys-957. An RING-type; atypical zinc finger spans residues 912-960; it reads LFCVLCRLPVKGAANACLACGHGGHIDHMMQWFEKHNVCATCGCKCLER.

It belongs to the WD repeat WDR59 family. Component of the GATOR complex consisting of mio, Nup44A/Seh1, Im11, Nplr3, Nplr2, Wdr24, Wdr59 and Sec13. Within the GATOR complex, probable component of the GATOR2 subcomplex which is likely composed of mio, Nup44A/Seh1, Wdr24, Wdr59 and Sec13. The GATOR2 complex associates with unmet in the absence of S-adenosyl-L-methionine; the mio-Wdr24-Nup44A subcomplex is essential and sufficient for this interaction while Wdr59 and Sec13 are dispensable. This association acts as a nutrient sensor to inhibit mTORC1 signaling in the absence of methionine.

The protein localises to the lysosome membrane. Functionally, a component of the GATOR complex, which functions as a regulator of the amino acid-sensing branch of the mTORC1 signaling pathway. The two GATOR subcomplexes, GATOR1 and GATOR2, regulate the mTORC1 pathway in order to mediate metabolic homeostasis, female gametogenesis and the response to amino acid limitation and complete starvation. GATOR2 activates the mTORC1 signaling pathway through the inhibition of the GATOR1 subcomplex, controlling the switch to cell proliferation and growth under nutrient replete conditions and during female oocyte development. Acts as an atypical component of the GATOR2 subcomplex, which can either promote or inhibit mTORC1 signaling, depending on tissues: inhibits mTORC1 activity by preventing the activity of GATOR2 in the ovary and the eye imaginal disk brain, while it promotes mTORC1 activity in the fat body. This is GATOR2 complex protein Wdr59 from Drosophila melanogaster (Fruit fly).